The chain runs to 103 residues: Small ribosomal subunit protein uS10 (103 aa).

The protein belongs to the universal ribosomal protein uS10 family. Part of the 30S ribosomal subunit.

Involved in the binding of tRNA to the ribosomes. This Desulfatibacillum aliphaticivorans protein is Small ribosomal subunit protein uS10.